The sequence spans 319 residues: 4-hydroxy-3-methylbut-2-enyl diphosphate reductase (319 aa).

Cysteine 18 is a [4Fe-4S] cluster binding site. 2 residues coordinate (2E)-4-hydroxy-3-methylbut-2-enyl diphosphate: histidine 47 and histidine 81. Histidine 47 and histidine 81 together coordinate dimethylallyl diphosphate. 2 residues coordinate isopentenyl diphosphate: histidine 47 and histidine 81. Position 103 (cysteine 103) interacts with [4Fe-4S] cluster. Residue histidine 131 coordinates (2E)-4-hydroxy-3-methylbut-2-enyl diphosphate. Histidine 131 contributes to the dimethylallyl diphosphate binding site. Histidine 131 is a binding site for isopentenyl diphosphate. Glutamate 133 functions as the Proton donor in the catalytic mechanism. Threonine 172 is a (2E)-4-hydroxy-3-methylbut-2-enyl diphosphate binding site. Cysteine 202 contacts [4Fe-4S] cluster. The (2E)-4-hydroxy-3-methylbut-2-enyl diphosphate site is built by serine 230, serine 231, asparagine 232, and serine 275. Serine 230, serine 231, asparagine 232, and serine 275 together coordinate dimethylallyl diphosphate. Residues serine 230, serine 231, asparagine 232, and serine 275 each contribute to the isopentenyl diphosphate site.

It belongs to the IspH family. The cofactor is [4Fe-4S] cluster.

It catalyses the reaction isopentenyl diphosphate + 2 oxidized [2Fe-2S]-[ferredoxin] + H2O = (2E)-4-hydroxy-3-methylbut-2-enyl diphosphate + 2 reduced [2Fe-2S]-[ferredoxin] + 2 H(+). The enzyme catalyses dimethylallyl diphosphate + 2 oxidized [2Fe-2S]-[ferredoxin] + H2O = (2E)-4-hydroxy-3-methylbut-2-enyl diphosphate + 2 reduced [2Fe-2S]-[ferredoxin] + 2 H(+). The protein operates within isoprenoid biosynthesis; dimethylallyl diphosphate biosynthesis; dimethylallyl diphosphate from (2E)-4-hydroxy-3-methylbutenyl diphosphate: step 1/1. Its pathway is isoprenoid biosynthesis; isopentenyl diphosphate biosynthesis via DXP pathway; isopentenyl diphosphate from 1-deoxy-D-xylulose 5-phosphate: step 6/6. Functionally, catalyzes the conversion of 1-hydroxy-2-methyl-2-(E)-butenyl 4-diphosphate (HMBPP) into a mixture of isopentenyl diphosphate (IPP) and dimethylallyl diphosphate (DMAPP). Acts in the terminal step of the DOXP/MEP pathway for isoprenoid precursor biosynthesis. The sequence is that of 4-hydroxy-3-methylbut-2-enyl diphosphate reductase from Beijerinckia indica subsp. indica (strain ATCC 9039 / DSM 1715 / NCIMB 8712).